Here is a 333-residue protein sequence, read N- to C-terminus: Torsin-1A (333 aa).

Positions 1 to 20 are cleaved as a signal peptide; that stretch reads MKLGRATLALLLLVPCVVRA. Residues 92–252 are interaction with SNAPIN; it reads KPKKPLTLSL…VSVFNNKNSG (161 aa). N-linked (GlcNAc...) asparagine glycans are attached at residues N144 and N159. The interval 252 to 333 is interaction with KLC1; the sequence is GFWHSSLIDR…FTKLDYYLDD (82 aa). The interval 313-333 is interaction with SYNE3; sequence KVFSDKGCKTVFTKLDYYLDD.

Belongs to the ClpA/ClpB family. Torsin subfamily. As to quaternary structure, homohexamer. Interacts with TOR1B; the interaction may be specific of neural tissues. Interacts (ATP-bound) with TOR1AIP1 and TOR1AIP2; the interactions induce ATPase activity. Interacts with KLHL14; preferentially when ATP-free. Interacts with KLC1 (via TPR repeats); the interaction associates TOR1A with the kinesin oligomeric complex. Interacts with COPS4; the interaction associates TOR1A with the CSN complex. Interacts with SNAPIN; the interaction is direct and associates SNAPIN with the CSN complex. Interacts with STON2. Interacts (ATP-bound) with SYNE3 (via KASH domain); the interaction is required for SYNE3 nuclear envelope localization. Interacts with VIM; the interaction associates TOR1A with the cytoskeleton. Interacts with PLEC. Interacts (ATP-bound) with SLC6A3; regulates SLC6A3 transport to the plasma membrane. In terms of processing, N-glycosylated. As to expression, expressed in brain (at protein level).

The protein resides in the endoplasmic reticulum lumen. Its subcellular location is the nucleus inner membrane. It is found in the cell projection. It localises to the growth cone. The protein localises to the cytoplasmic vesicle membrane. The protein resides in the cytoplasmic vesicle. Its subcellular location is the secretory vesicle. It is found in the synaptic vesicle. It carries out the reaction ATP + H2O = ADP + phosphate + H(+). Functionally, protein with chaperone functions important for the control of protein folding, processing, stability and localization as well as for the reduction of misfolded protein aggregates. Involved in the regulation of synaptic vesicle recycling, controls STON2 protein stability in collaboration with the COP9 signalosome complex (CSN). In the nucleus, may link the cytoskeleton with the nuclear envelope, this mechanism seems to be crucial for the control of nuclear polarity, cell movement and, specifically in neurons, nuclear envelope integrity. Participates in the cellular trafficking and may regulate the subcellular location of multipass membrane proteins such as the dopamine transporter SLC6A3, leading to the modulation of dopamine neurotransmission. In the endoplasmic reticulum, plays a role in the quality control of protein folding by increasing clearance of misfolded proteins such as SGCE variants or holding them in an intermediate state for proper refolding. May have a redundant function with TOR1B in non-neural tissues. The sequence is that of Torsin-1A (Tor1a) from Rattus norvegicus (Rat).